We begin with the raw amino-acid sequence, 386 residues long: S-adenosylmethionine synthase (386 aa).

ATP is bound at residue His-17. Asp-19 serves as a coordination point for Mg(2+). A K(+)-binding site is contributed by Glu-45. The L-methionine site is built by Glu-58 and Gln-101. The tract at residues 101–111 is flexible loop; the sequence is QSPDISQGVTE. Residues 168–170, Asp-242, 248–249, Ala-265, and Lys-269 contribute to the ATP site; these read DAK and RK. L-methionine is bound at residue Asp-242. Lys-273 serves as a coordination point for L-methionine.

The protein belongs to the AdoMet synthase family. Homotetramer; dimer of dimers. It depends on Mg(2+) as a cofactor. Requires K(+) as cofactor.

Its subcellular location is the cytoplasm. It carries out the reaction L-methionine + ATP + H2O = S-adenosyl-L-methionine + phosphate + diphosphate. The protein operates within amino-acid biosynthesis; S-adenosyl-L-methionine biosynthesis; S-adenosyl-L-methionine from L-methionine: step 1/1. Catalyzes the formation of S-adenosylmethionine (AdoMet) from methionine and ATP. The overall synthetic reaction is composed of two sequential steps, AdoMet formation and the subsequent tripolyphosphate hydrolysis which occurs prior to release of AdoMet from the enzyme. The protein is S-adenosylmethionine synthase of Leptospira interrogans serogroup Icterohaemorrhagiae serovar copenhageni (strain Fiocruz L1-130).